The following is a 255-amino-acid chain: D-aminoacyl-tRNA deacylase (255 aa).

This sequence belongs to the DtdA deacylase family. In terms of assembly, monomer. It depends on Zn(2+) as a cofactor.

It catalyses the reaction a D-aminoacyl-tRNA + H2O = a tRNA + a D-alpha-amino acid + H(+). The catalysed reaction is glycyl-tRNA(Ala) + H2O = tRNA(Ala) + glycine + H(+). In terms of biological role, D-aminoacyl-tRNA deacylase with broad substrate specificity. By recycling D-aminoacyl-tRNA to D-amino acids and free tRNA molecules, this enzyme counteracts the toxicity associated with the formation of D-aminoacyl-tRNA entities in vivo. This Picrophilus torridus (strain ATCC 700027 / DSM 9790 / JCM 10055 / NBRC 100828 / KAW 2/3) protein is D-aminoacyl-tRNA deacylase.